Consider the following 85-residue polypeptide: UPF0297 protein CHY_0540 (85 aa).

The protein belongs to the UPF0297 family.

This chain is UPF0297 protein CHY_0540, found in Carboxydothermus hydrogenoformans (strain ATCC BAA-161 / DSM 6008 / Z-2901).